The chain runs to 829 residues: Probable beta-glucosidase H (829 aa).

Asn13 is a glycosylation site (N-linked (GlcNAc...) asparagine). Residue Asp225 is part of the active site. N-linked (GlcNAc...) asparagine glycans are attached at residues Asn304, Asn473, Asn602, Asn627, Asn664, and Asn749. Residues 389-548 (RMLSNAVIHF…DPEQMVANAV (160 aa)) form the PA14 domain.

Belongs to the glycosyl hydrolase 3 family.

Its subcellular location is the secreted. The catalysed reaction is Hydrolysis of terminal, non-reducing beta-D-glucosyl residues with release of beta-D-glucose.. Its pathway is glycan metabolism; cellulose degradation. Beta-glucosidases are one of a number of cellulolytic enzymes involved in the degradation of cellulosic biomass. Catalyzes the last step releasing glucose from the inhibitory cellobiose. The chain is Probable beta-glucosidase H (bglH) from Aspergillus fumigatus (strain CBS 144.89 / FGSC A1163 / CEA10) (Neosartorya fumigata).